The chain runs to 484 residues: Sperm-associated antigen 8 (484 aa).

Residues 1–11 (METSESTDRSQ) show a composition bias toward basic and acidic residues. Disordered stretches follow at residues 1–32 (METS…DPFS), 123–221 (DLSS…SAPV), and 324–348 (LQPQ…SHCQ). Composition is skewed to low complexity over residues 20-32 (SSDG…DPFS) and 125-160 (SSSR…SSSS). The segment covering 161–195 (GPGGSPGGSGRGPGHGPGPGGGSGQGPGGGSGQGT) has biased composition (gly residues). The span at 324–339 (LQPQSPTSSCTTQKDS) shows a compositional bias: polar residues. Mn regions lie at residues 332–345 (SCTT…PPKS) and 384–398 (ESVT…LVQA). Residues 455–484 (PLPFEPESYSQHGEISSLACQGGGQGGGGG) are disordered. Residues 475–484 (QGGGQGGGGG) show a composition bias toward gly residues.

It belongs to the SPAG8 family. As to quaternary structure, microtubule inner protein component of sperm flagellar doublet microtubules. Interacts with FHL5 (via second LIM domain). Interacts with RANBP9. Expressed in trachea multiciliated cells.

Its subcellular location is the cytoplasm. The protein localises to the nucleus. It localises to the cytoplasmic vesicle. It is found in the secretory vesicle. The protein resides in the acrosome. Its subcellular location is the cytoskeleton. The protein localises to the microtubule organizing center. It localises to the spindle. It is found in the cilium axoneme. The protein resides in the flagellum axoneme. Its function is as follows. Microtubule inner protein (MIP) part of the dynein-decorated doublet microtubules (DMTs) in cilia axoneme, which is required for motile cilia beating. Plays a role in spermatogenesis by enhancing the binding of CREM isoform tau to its coactivator FHL5 and increasing the FHL5-regulated transcriptional activation of CREM isoform tau. Involved in the acrosome reaction and in binding of sperm to the zona pellucida. Plays a role in regulation of the cell cycle by controlling progression through the G2/M phase, possibly by delaying the activation of CDK1 which is required for entry into mitosis. May play a role in fertility and microtubule formation through interaction with RANBP9. In Bos taurus (Bovine), this protein is Sperm-associated antigen 8 (SPAG8).